The primary structure comprises 210 residues: Prolactin (210 aa).

The N-terminal stretch at 1 to 23 (MARRSQGTKLHLAVLCLVVSCHA) is a signal peptide. 2 disulfide bridges follow: Cys-69–Cys-183 and Cys-200–Cys-210.

Belongs to the somatotropin/prolactin family. Pituitary gland.

It localises to the secreted. This chain is Prolactin (prl), found in Coregonus autumnalis (Arctic cisco).